A 277-amino-acid polypeptide reads, in one-letter code: Sulfur carrier protein FdhD (277 aa).

Catalysis depends on cysteine 123, which acts as the Cysteine persulfide intermediate. 263–268 (FVRGNK) contacts Mo-bis(molybdopterin guanine dinucleotide).

It belongs to the FdhD family.

Its subcellular location is the cytoplasm. Functionally, required for formate dehydrogenase (FDH) activity. Acts as a sulfur carrier protein that transfers sulfur from IscS to the molybdenum cofactor prior to its insertion into FDH. The polypeptide is Sulfur carrier protein FdhD (Corynebacterium efficiens (strain DSM 44549 / YS-314 / AJ 12310 / JCM 11189 / NBRC 100395)).